A 142-amino-acid chain; its full sequence is Neuritin (142 aa).

The N-terminal stretch at 1–27 is a signal peptide; sequence MGLKLNGRYISLILAVQIAYLVQAVRA. Glycine 116 is lipidated: GPI-anchor amidated glycine. Residues 117-142 constitute a propeptide, removed in mature form; that stretch reads AAGSLLPALSVLLVSLSAALATWFSF.

The protein belongs to the neuritin family. Component of the outer core of AMPAR complex. AMPAR complex consists of an inner core made of 4 pore-forming GluA/GRIA proteins (GRIA1, GRIA2, GRIA3 and GRIA4) and 4 major auxiliary subunits arranged in a twofold symmetry. One of the two pairs of distinct binding sites is occupied either by CNIH2, CNIH3 or CACNG2, CACNG3. The other harbors CACNG2, CACNG3, CACNG4, CACNG8 or GSG1L. This inner core of AMPAR complex is complemented by outer core constituents binding directly to the GluA/GRIA proteins at sites distinct from the interaction sites of the inner core constituents. Outer core constituents include at least PRRT1, PRRT2, CKAMP44/SHISA9, FRRS1L and NRN1. The proteins of the inner and outer core serve as a platform for other, more peripherally associated AMPAR constituents. Alone or in combination, these auxiliary subunits control the gating and pharmacology of the AMPAR complex and profoundly impact their biogenesis and protein processing. Expressed in the brain (at protein level).

Its subcellular location is the cell membrane. It is found in the synapse. In terms of biological role, promotes neurite outgrowth and especially branching of neuritic processes in primary hippocampal and cortical cells. This is Neuritin (Nrn1) from Mus musculus (Mouse).